Reading from the N-terminus, the 146-residue chain is Probable U6 snRNA-associated Sm-like protein LSm4 (146 aa).

Positions 2 to 75 (LPLSLLKTAQ…IKYLRVPDEV (74 aa)) constitute a Sm domain. Basic and acidic residues predominate over residues 80-91 (QEEAKSRTDRKP). The segment at 80–146 (QEEAKSRTDR…GGRGGGRGRG (67 aa)) is disordered. Over residues 137–146 (GGRGGGRGRG) the composition is skewed to gly residues.

Belongs to the snRNP Sm proteins family. In terms of assembly, LSm subunits form a heteromer with a doughnut shape.

It is found in the nucleus. Functionally, binds specifically to the 3'-terminal U-tract of U6 snRNA. The sequence is that of Probable U6 snRNA-associated Sm-like protein LSm4 from Nicotiana tabacum (Common tobacco).